We begin with the raw amino-acid sequence, 548 residues long: Adenine deaminase (548 aa).

This sequence belongs to the metallo-dependent hydrolases superfamily. Adenine deaminase family. Mn(2+) serves as cofactor.

It catalyses the reaction adenine + H2O + H(+) = hypoxanthine + NH4(+). This is Adenine deaminase from Borreliella burgdorferi (strain ATCC 35210 / DSM 4680 / CIP 102532 / B31) (Borrelia burgdorferi).